Consider the following 371-residue polypeptide: 4-hydroxy-3-methylbut-2-en-1-yl diphosphate synthase (flavodoxin) (371 aa).

The [4Fe-4S] cluster site is built by Cys-271, Cys-274, Cys-306, and Glu-313.

It belongs to the IspG family. The cofactor is [4Fe-4S] cluster.

The enzyme catalyses (2E)-4-hydroxy-3-methylbut-2-enyl diphosphate + oxidized [flavodoxin] + H2O + 2 H(+) = 2-C-methyl-D-erythritol 2,4-cyclic diphosphate + reduced [flavodoxin]. The protein operates within isoprenoid biosynthesis; isopentenyl diphosphate biosynthesis via DXP pathway; isopentenyl diphosphate from 1-deoxy-D-xylulose 5-phosphate: step 5/6. Its function is as follows. Converts 2C-methyl-D-erythritol 2,4-cyclodiphosphate (ME-2,4cPP) into 1-hydroxy-2-methyl-2-(E)-butenyl 4-diphosphate. This Actinobacillus succinogenes (strain ATCC 55618 / DSM 22257 / CCUG 43843 / 130Z) protein is 4-hydroxy-3-methylbut-2-en-1-yl diphosphate synthase (flavodoxin).